Reading from the N-terminus, the 395-residue chain is 1-deoxy-D-xylulose 5-phosphate reductoisomerase (395 aa).

Residues threonine 10, glycine 11, serine 12, isoleucine 13, and asparagine 123 each contribute to the NADPH site. A 1-deoxy-D-xylulose 5-phosphate-binding site is contributed by lysine 124. Glutamate 125 provides a ligand contact to NADPH. Position 149 (aspartate 149) interacts with Mn(2+). Serine 150, glutamate 151, serine 185, and histidine 208 together coordinate 1-deoxy-D-xylulose 5-phosphate. Mn(2+) is bound at residue glutamate 151. Glycine 214 contacts NADPH. Positions 221, 226, 227, and 230 each coordinate 1-deoxy-D-xylulose 5-phosphate. Glutamate 230 serves as a coordination point for Mn(2+).

This sequence belongs to the DXR family. Mg(2+) is required as a cofactor. The cofactor is Mn(2+).

The catalysed reaction is 2-C-methyl-D-erythritol 4-phosphate + NADP(+) = 1-deoxy-D-xylulose 5-phosphate + NADPH + H(+). It functions in the pathway isoprenoid biosynthesis; isopentenyl diphosphate biosynthesis via DXP pathway; isopentenyl diphosphate from 1-deoxy-D-xylulose 5-phosphate: step 1/6. Functionally, catalyzes the NADPH-dependent rearrangement and reduction of 1-deoxy-D-xylulose-5-phosphate (DXP) to 2-C-methyl-D-erythritol 4-phosphate (MEP). The protein is 1-deoxy-D-xylulose 5-phosphate reductoisomerase of Shewanella sediminis (strain HAW-EB3).